The sequence spans 522 residues: Maturase K (522 aa).

The protein belongs to the intron maturase 2 family. MatK subfamily.

Its subcellular location is the plastid. It localises to the chloroplast. Usually encoded in the trnK tRNA gene intron. Probably assists in splicing its own and other chloroplast group II introns. The polypeptide is Maturase K (Micranthus junceus (Micranthus plantagineus var. junceus)).